The sequence spans 325 residues: Elongation factor P--(R)-beta-lysine ligase (325 aa).

Substrate is bound at residue 76 to 78 (SPE). ATP contacts are provided by residues 100-102 (RNE) and asparagine 109. Substrate is bound at residue tyrosine 118. Residue 244–245 (EL) coordinates ATP. Glutamate 251 serves as a coordination point for substrate. Glycine 300 serves as a coordination point for ATP.

The protein belongs to the class-II aminoacyl-tRNA synthetase family. EpmA subfamily. Homodimer.

It carries out the reaction D-beta-lysine + L-lysyl-[protein] + ATP = N(6)-((3R)-3,6-diaminohexanoyl)-L-lysyl-[protein] + AMP + diphosphate + H(+). With EpmB is involved in the beta-lysylation step of the post-translational modification of translation elongation factor P (EF-P). Catalyzes the ATP-dependent activation of (R)-beta-lysine produced by EpmB, forming a lysyl-adenylate, from which the beta-lysyl moiety is then transferred to the epsilon-amino group of a conserved specific lysine residue in EF-P. The chain is Elongation factor P--(R)-beta-lysine ligase from Enterobacter sp. (strain 638).